Here is a 278-residue protein sequence, read N- to C-terminus: Ras-related protein Rab-40A-like (278 aa).

Residues G26, K27, and S28 each coordinate GTP. Residue S28 coordinates Mg(2+). A switch-I region spans residues 41-49 (SPYSHLGGI). D69 provides a ligand contact to Mg(2+). G72, N126, and R127 together coordinate GTP. Residues 72–88 (GQGRFCTIFRSYSRGAQ) are switch-II. An SOCS box domain is found at 175–228 (LLRHRLNWLGRPSKVLSLQDLCCRTIVSCTPVHLVDKLPLPIALRSHLKSFSMA). C270 carries the S-palmitoyl cysteine lipid modification. C275 is lipidated: S-geranylgeranyl cysteine.

This sequence belongs to the small GTPase superfamily. Rab family. Requires Mg(2+) as cofactor. Expressed in brain, lung, heart, skeletal muscle, kidney and liver. Highest expression in brain. Expressed in fetal brain and kidney.

The protein resides in the membrane. It is found in the cytoplasm. The protein localises to the mitochondrion. It catalyses the reaction GTP + H2O = GDP + phosphate + H(+). It functions in the pathway protein modification; protein ubiquitination. Regulated by guanine nucleotide exchange factors (GEFs) which promote the exchange of bound GDP for free GTP. Regulated by GTPase activating proteins (GAPs) which increase the GTP hydrolysis activity. Inhibited by GDP dissociation inhibitors (GDIs). Functionally, may act as substrate-recognition component of the ECS(RAB40) E3 ubiquitin ligase complex which mediates the ubiquitination and subsequent proteasomal degradation of target proteins. The Rab40 subfamily belongs to the Rab family that are key regulators of intracellular membrane trafficking, from the formation of transport vesicles to their fusion with membranes. Rabs cycle between an inactive GDP-bound form and an active GTP-bound form that is able to recruit to membranes different sets of downstream effectors directly responsible for vesicle formation, movement, tethering and fusion. This chain is Ras-related protein Rab-40A-like, found in Homo sapiens (Human).